The sequence spans 420 residues: MKWYKKIGLLGIVGLTSVLLAACNKSKASQSKEDKVTIEYFNQKKEMDATLKKIIKDFERENPKIHVKMTSVPDAGTVLKTRVLSGDVPDVINIYPQNMDFQEWSKAGYFYNMTGKAYLNHLKNHYANEYKVNQKVYSVPLTANVSGIYYNKTKFKELGLKVPETWDEFVKLVEEIKAKKETPFALAGTEGWTLNGYHQLSLISVTGSANAANKYLRFSQPNSIKTSDKILKEDMVRLNLLADDGNQQKNWKGASYNDALVAFANEKALMTPNGSWALPAIKQQDPKFEIGTFAFPGKKTGNGITVGAGDLALSISAKTKHLKEAEKFVKYMTTARAMQKYYDVDGSPVAVKGVREDKNSPLQPLTKLAFTDKHYVWLGQHWNSEDDFFTATTNYLMTKNAKGLADGLNAFFNPMKADVD.

The first 22 residues, 1–22, serve as a signal peptide directing secretion; that stretch reads MKWYKKIGLLGIVGLTSVLLAA. Residue Cys-23 is the site of N-palmitoyl cysteine attachment. Cys-23 is lipidated: S-diacylglycerol cysteine.

The protein belongs to the bacterial solute-binding protein 1 family.

The protein resides in the cell membrane. Involved in a binding protein-dependent transport system responsible for the uptake of melibiose, raffinose and isomaltotriose. The protein is Multiple sugar-binding protein of Streptococcus mutans serotype c (strain ATCC 700610 / UA159).